We begin with the raw amino-acid sequence, 427 residues long: tRNA(Ile)-lysidine synthase (427 aa).

27-32 serves as a coordination point for ATP; that stretch reads SGGVDS.

This sequence belongs to the tRNA(Ile)-lysidine synthase family.

Its subcellular location is the cytoplasm. The catalysed reaction is cytidine(34) in tRNA(Ile2) + L-lysine + ATP = lysidine(34) in tRNA(Ile2) + AMP + diphosphate + H(+). Functionally, ligates lysine onto the cytidine present at position 34 of the AUA codon-specific tRNA(Ile) that contains the anticodon CAU, in an ATP-dependent manner. Cytidine is converted to lysidine, thus changing the amino acid specificity of the tRNA from methionine to isoleucine. This chain is tRNA(Ile)-lysidine synthase, found in Streptococcus equi subsp. zooepidemicus (strain H70).